The following is a 142-amino-acid chain: Hemoglobin subunit alpha-1 (142 aa).

The region spanning 2–142 is the Globin domain; sequence VLSPADKTNI…VSTVLTSKYR (141 aa). Residue histidine 59 participates in O2 binding. A heme b-binding site is contributed by histidine 88.

This sequence belongs to the globin family. In terms of assembly, heterotetramer of two alpha chains and two beta chains. As to expression, red blood cells.

Functionally, involved in oxygen transport from the lung to the various peripheral tissues. This chain is Hemoglobin subunit alpha-1, found in Arctocephalus galapagoensis (Galapagoes fur seal).